The following is a 144-amino-acid chain: D-aminoacyl-tRNA deacylase (144 aa).

The Gly-cisPro motif, important for rejection of L-amino acids motif lies at 137-138; the sequence is GP.

The protein belongs to the DTD family. Homodimer.

The protein localises to the cytoplasm. The catalysed reaction is glycyl-tRNA(Ala) + H2O = tRNA(Ala) + glycine + H(+). The enzyme catalyses a D-aminoacyl-tRNA + H2O = a tRNA + a D-alpha-amino acid + H(+). Its function is as follows. An aminoacyl-tRNA editing enzyme that deacylates mischarged D-aminoacyl-tRNAs. Also deacylates mischarged glycyl-tRNA(Ala), protecting cells against glycine mischarging by AlaRS. Acts via tRNA-based rather than protein-based catalysis; rejects L-amino acids rather than detecting D-amino acids in the active site. By recycling D-aminoacyl-tRNA to D-amino acids and free tRNA molecules, this enzyme counteracts the toxicity associated with the formation of D-aminoacyl-tRNA entities in vivo and helps enforce protein L-homochirality. The protein is D-aminoacyl-tRNA deacylase of Marinomonas sp. (strain MWYL1).